Here is a 156-residue protein sequence, read N- to C-terminus: Small ribosomal subunit protein uS7c (156 aa).

This sequence belongs to the universal ribosomal protein uS7 family. As to quaternary structure, part of the 30S ribosomal subunit.

It localises to the plastid. The protein localises to the chloroplast. In terms of biological role, one of the primary rRNA binding proteins, it binds directly to 16S rRNA where it nucleates assembly of the head domain of the 30S subunit. The polypeptide is Small ribosomal subunit protein uS7c (rps7) (Rhodomonas salina (Cryptomonas salina)).